The chain runs to 375 residues: Alcohol dehydrogenase 1C (375 aa).

At S2 the chain carries N-acetylserine. S23 carries the phosphoserine modification. Zn(2+) is bound by residues C47, H68, C98, C101, C104, C112, and C175. Residues 200-205 (GLGGVG), D224, K229, I270, 293-295 (VGV), 318-320 (AIF), and R370 contribute to the NAD(+) site.

The protein belongs to the zinc-containing alcohol dehydrogenase family. As to quaternary structure, dimer of identical or non-identical chains of class I alcohol dehydrogenase: ADH1A, ADH1B, and ADH1C. The cofactor is Zn(2+). Expressed in kidney.

Its subcellular location is the cytoplasm. The enzyme catalyses a primary alcohol + NAD(+) = an aldehyde + NADH + H(+). It carries out the reaction ethanol + NAD(+) = acetaldehyde + NADH + H(+). Functionally, alcohol dehydrogenase. Exhibits high activity for ethanol oxidation and plays a major role in ethanol catabolism. The polypeptide is Alcohol dehydrogenase 1C (ADH1C) (Papio hamadryas (Hamadryas baboon)).